The chain runs to 369 residues: Mitogen-activated protein kinase 5 (369 aa).

The Protein kinase domain occupies 36–322 (QPPIMPIGRG…VEEALDHPYL (287 aa)). Residues 42 to 50 (IGRGAYGIV) and Lys-65 contribute to the ATP site. The Proton acceptor role is filled by Asp-162. Thr-194 is modified (phosphothreonine). Residues 194-196 (TEY) carry the TXY motif. Tyr-196 bears the Phosphotyrosine mark.

The protein belongs to the protein kinase superfamily. CMGC Ser/Thr protein kinase family. MAP kinase subfamily. As to quaternary structure, interacts with MKK1. In terms of processing, dually phosphorylated on Thr-194 and Tyr-196, which activates the enzyme.

It carries out the reaction L-seryl-[protein] + ATP = O-phospho-L-seryl-[protein] + ADP + H(+). It catalyses the reaction L-threonyl-[protein] + ATP = O-phospho-L-threonyl-[protein] + ADP + H(+). With respect to regulation, activated by threonine and tyrosine phosphorylation. Functionally, involved in disease resistance and abiotic stress tolerance signaling pathways. The chain is Mitogen-activated protein kinase 5 (MPK5) from Oryza sativa subsp. indica (Rice).